We begin with the raw amino-acid sequence, 80 residues long: Putative membrane protein insertion efficiency factor (80 aa).

The protein belongs to the UPF0161 family.

It is found in the cell inner membrane. In terms of biological role, could be involved in insertion of integral membrane proteins into the membrane. This Picosynechococcus sp. (strain ATCC 27264 / PCC 7002 / PR-6) (Agmenellum quadruplicatum) protein is Putative membrane protein insertion efficiency factor.